Here is a 252-residue protein sequence, read N- to C-terminus: tRNA1(Val) (adenine(37)-N6)-methyltransferase (252 aa).

Belongs to the methyltransferase superfamily. tRNA (adenine-N(6)-)-methyltransferase family.

It is found in the cytoplasm. It carries out the reaction adenosine(37) in tRNA1(Val) + S-adenosyl-L-methionine = N(6)-methyladenosine(37) in tRNA1(Val) + S-adenosyl-L-homocysteine + H(+). Specifically methylates the adenine in position 37 of tRNA(1)(Val) (anticodon cmo5UAC). In Yersinia pseudotuberculosis serotype O:3 (strain YPIII), this protein is tRNA1(Val) (adenine(37)-N6)-methyltransferase.